The sequence spans 101 residues: MEITEVRVFPVNEEKLKAYVTITLDHCFVIRDLKVIHGNTGLFIAMPAKRRKDGTFKDIAHPLNSDTREKMERTILAEYDRELKKGGAAPARATGTDPHED.

The disordered stretch occupies residues 82–101 (ELKKGGAAPARATGTDPHED).

Belongs to the SpoVG family.

Could be involved in septation. The chain is Putative septation protein SpoVG from Anaeromyxobacter dehalogenans (strain 2CP-1 / ATCC BAA-258).